A 79-amino-acid chain; its full sequence is Protein NOI4 (79 aa).

Positions 31–68 (KARDEKKTGGKPGSPGKSSEGHVKSGGGDPSKPQPKKW) are disordered. Ser44 carries the phosphoserine modification.

Belongs to the RIN4 family. Proteolytic cleaved by P.syringae pv tomato AvrRpt2 after Gly-12; this cleavage is critical for subsequent proteasome-dependent elimination.

The sequence is that of Protein NOI4 from Arabidopsis thaliana (Mouse-ear cress).